The following is a 442-amino-acid chain: MLKIKRVPTVVSNYQKDDGAEDPVGCGRNCLGACCLNGARLPLYACKNLVKSGEKLVISHEAIEPPVAFLESLVLGEWEDRFQRGLFRYDVTACETKVIPGKYGFVAQLNEGRHLKKRPTEFRVDKVLQSFDGSKFNFTKVGQEELLFQFEAGEDAQVQFFPCMPIDPENSPSVVAINVSPIEYGHVLLIPRVLDCLPQRIDHKSLLLAVHMAAEAANPYFRLGYNSLGAFATINHLHFQAYYLAMPFPLEKAPTKKITTTVSGVKISELLSYPVRSLLFEGGSSMQELSDTVSDCCVCLQNNNIPFNILISDCGRQIFLMPQCYAEKQALGEVSPEVLETQVNPAVWEISGHMVLKRKEDYEGASEDNAWRLLAEASLSEERFKEVTALAFEAIGCSNQEEDLEGTIVHQQNSSGNVNQKSNRTHGGPITNGTAAECLVLQ.

The active-site Tele-GMP-histidine intermediate is His-238.

It belongs to the GDPGP1 family. As to quaternary structure, interacts with TLP1. As to expression, expressed in leaves, stems, roots, flowers and siliques. Highest expression in green tissues.

Its subcellular location is the cytoplasm. It is found in the nucleus. It catalyses the reaction GDP-beta-L-galactose + phosphate = beta-L-galactose 1-phosphate + GDP + H(+). It functions in the pathway cofactor biosynthesis; L-ascorbate biosynthesis via GDP-alpha-D-mannose pathway; L-ascorbate from GDP-alpha-D-mannose: step 2/5. Not inhibited by dithiothreitol, N-ethylmaleimide, phenylmethane sulfonyl fluoride, ascorbate, L-galactose and L-galactonolactone. In terms of biological role, catalyzes a reaction of the Smirnoff-Wheeler pathway, the major route to ascorbate biosynthesis in plants. Acts as a phosphorylase rather than as a transferase. Uses preferentially GDP-L-galactose and GDP-D-glucose as substrates. Lower activity with GDP-L-fucose, very low activity with GDP-D-mannose, and no activity with UDP-D-glucose, UDP-D-galactose or ADP-D-glucose. Highly specific for inorganic phosphate as the guanylyl acceptor. This Arabidopsis thaliana (Mouse-ear cress) protein is GDP-L-galactose phosphorylase 1 (VTC2).